The following is a 238-amino-acid chain: CD63 antigen (238 aa).

Residues 2 to 11 (AVEGGMKCVK) lie on the Cytoplasmic side of the membrane. The chain crosses the membrane as a helical span at residues 12–32 (FLLYVLLLAFCACAVGLIAIG). Over 33–51 (VAVQVVLKQAITHETTAGS) the chain is Extracellular. Residues 52–72 (LLPVVIIAVGAFLFLVAFVGC) traverse the membrane as a helical segment. Over 73–81 (CGACKENYC) the chain is Cytoplasmic. A helical transmembrane segment spans residues 82–102 (LMITFAIFLSLIMLVEVAVAI). Residues 103-203 (AGYVFRDQVK…TIAAWLRKNV (101 aa)) lie on the Extracellular side of the membrane. 3 N-linked (GlcNAc...) asparagine glycosylation sites follow: Asn130, Asn150, and Asn172. Residues 204 to 224 (LLVAGAALGIAFVEVLGIIFS) traverse the membrane as a helical segment. The Cytoplasmic segment spans residues 225–238 (CCLVKSIRSGYEVM). The Lysosomal targeting motif motif lies at 234–238 (GYEVM).

This sequence belongs to the tetraspanin (TM4SF) family. As to quaternary structure, interacts with TIMP1 and ITGB1 and recruits TIMP1 to ITGB1. Interacts with CD9. Identified in a complex with CD9 and ITGB3. Interacts with PMEL. Interacts with KDR/VEGFR2; identified in a complex with ITGB1 and KDR/VEGFR2 and is required to recruit KDR to ITGB1 complexes. Interacts with SYT7. Post-translationally, palmitoylated at a low, basal level in unstimulated platelets. The level of palmitoylation increases when platelets are activated by thrombin (in vitro). As to expression, detected in mast cells and platelets (at protein level).

The protein resides in the cell membrane. The protein localises to the lysosome membrane. It localises to the late endosome membrane. Its subcellular location is the endosome. It is found in the multivesicular body. The protein resides in the melanosome. The protein localises to the secreted. It localises to the extracellular exosome. Its subcellular location is the cell surface. Its function is as follows. Functions as a cell surface receptor for TIMP1 and plays a role in the activation of cellular signaling cascades. Plays a role in the activation of ITGB1 and integrin signaling, leading to the activation of AKT, FAK/PTK2 and MAP kinases. Promotes cell survival, reorganization of the actin cytoskeleton, cell adhesion, spreading and migration, via its role in the activation of AKT and FAK/PTK2. Plays a role in VEGFA signaling via its role in regulating the internalization of KDR/VEGFR2. Plays a role in intracellular vesicular transport processes, and is required for normal trafficking of the PMEL luminal domain that is essential for the development and maturation of melanocytes. Plays a role in the adhesion of leukocytes onto endothelial cells via its role in the regulation of SELP trafficking. May play a role in mast cell degranulation in response to Ms4a2/FceRI stimulation, but not in mast cell degranulation in response to other stimuli. The polypeptide is CD63 antigen (Cd63) (Rattus norvegicus (Rat)).